The following is a 248-amino-acid chain: Pyridoxine 5'-phosphate synthase (248 aa).

Positions 8 and 19 each coordinate 3-amino-2-oxopropyl phosphate. His-44 serves as the catalytic Proton acceptor. The 1-deoxy-D-xylulose 5-phosphate site is built by Arg-46 and His-51. Catalysis depends on Glu-76, which acts as the Proton acceptor. Position 106 (Thr-106) interacts with 1-deoxy-D-xylulose 5-phosphate. The active-site Proton donor is His-200. 3-amino-2-oxopropyl phosphate is bound by residues Asp-201 and 223-224 (GH).

It belongs to the PNP synthase family. As to quaternary structure, homooctamer; tetramer of dimers.

The protein localises to the cytoplasm. The catalysed reaction is 3-amino-2-oxopropyl phosphate + 1-deoxy-D-xylulose 5-phosphate = pyridoxine 5'-phosphate + phosphate + 2 H2O + H(+). It functions in the pathway cofactor biosynthesis; pyridoxine 5'-phosphate biosynthesis; pyridoxine 5'-phosphate from D-erythrose 4-phosphate: step 5/5. Its function is as follows. Catalyzes the complicated ring closure reaction between the two acyclic compounds 1-deoxy-D-xylulose-5-phosphate (DXP) and 3-amino-2-oxopropyl phosphate (1-amino-acetone-3-phosphate or AAP) to form pyridoxine 5'-phosphate (PNP) and inorganic phosphate. This is Pyridoxine 5'-phosphate synthase from Chelativorans sp. (strain BNC1).